The primary structure comprises 631 residues: Bromodomain-containing protein 9 (631 aa).

Disordered stretches follow at residues Met-1–Lys-26 and Val-39–Lys-116. Composition is skewed to basic and acidic residues over residues Arg-9 to Lys-26 and Ser-50 to His-63. Over residues Lys-64–Lys-73 the composition is skewed to basic residues. Positions Ser-74–Arg-85 are enriched in basic and acidic residues. Basic residues predominate over residues Arg-86 to Arg-96. Residues Asn-166 to Gln-270 form the Bromo domain. Positions Val-244 to Asn-246 are histone H4K5ac H4K8ac and histone H4K5bu H4K8bu binding. The disordered stretch occupies residues Ala-571–Ser-631. Over residues Ser-581–Ala-590 the composition is skewed to low complexity.

In terms of assembly, binds acetylated histones H3 and H4. Binds butyrylated histone H4.

The protein localises to the nucleus. Plays a role in chromatin remodeling and regulation of transcription. Acts as a chromatin reader that recognizes and binds acylated histones: binds histones that are acetylated and/or butyrylated. The polypeptide is Bromodomain-containing protein 9 (brd9) (Danio rerio (Zebrafish)).